A 423-amino-acid chain; its full sequence is UDP-N-acetylglucosamine 1-carboxyvinyltransferase (423 aa).

Residue Lys22–Asn23 coordinates phosphoenolpyruvate. Arg93 contributes to the UDP-N-acetyl-alpha-D-glucosamine binding site. Cys117 functions as the Proton donor in the catalytic mechanism. The residue at position 117 (Cys117) is a 2-(S-cysteinyl)pyruvic acid O-phosphothioketal. Asp305 and Ile327 together coordinate UDP-N-acetyl-alpha-D-glucosamine.

Belongs to the EPSP synthase family. MurA subfamily.

It localises to the cytoplasm. It catalyses the reaction phosphoenolpyruvate + UDP-N-acetyl-alpha-D-glucosamine = UDP-N-acetyl-3-O-(1-carboxyvinyl)-alpha-D-glucosamine + phosphate. The protein operates within cell wall biogenesis; peptidoglycan biosynthesis. In terms of biological role, cell wall formation. Adds enolpyruvyl to UDP-N-acetylglucosamine. The sequence is that of UDP-N-acetylglucosamine 1-carboxyvinyltransferase from Acidithiobacillus ferrooxidans (strain ATCC 23270 / DSM 14882 / CIP 104768 / NCIMB 8455) (Ferrobacillus ferrooxidans (strain ATCC 23270)).